Here is a 488-residue protein sequence, read N- to C-terminus: Beta-amylase (488 aa).

Substrate is bound by residues D51, H91, and D99. E184 (proton donor) is an active-site residue. 3 residues coordinate substrate: K293, H298, and T340. The Proton acceptor role is filled by E378. Residues 379–380 and R418 each bind substrate; that span reads NA.

It belongs to the glycosyl hydrolase 14 family.

The catalysed reaction is Hydrolysis of (1-&gt;4)-alpha-D-glucosidic linkages in polysaccharides so as to remove successive maltose units from the non-reducing ends of the chains.. The sequence is that of Beta-amylase (BMY1) from Zea mays (Maize).